Consider the following 165-residue polypeptide: Large ribosomal subunit protein uL10 (165 aa).

The protein belongs to the universal ribosomal protein uL10 family. In terms of assembly, part of the ribosomal stalk of the 50S ribosomal subunit. The N-terminus interacts with L11 and the large rRNA to form the base of the stalk. The C-terminus forms an elongated spine to which L12 dimers bind in a sequential fashion forming a multimeric L10(L12)X complex.

Its function is as follows. Forms part of the ribosomal stalk, playing a central role in the interaction of the ribosome with GTP-bound translation factors. This Mycoplasma mycoides subsp. mycoides SC (strain CCUG 32753 / NCTC 10114 / PG1) protein is Large ribosomal subunit protein uL10.